A 62-amino-acid chain; its full sequence is Small ribosomal subunit protein eS27 (62 aa).

The Zn(2+) site is built by Cys-17, Cys-20, Cys-36, and Cys-39. The segment at 17 to 39 (CNDCENEQIIFGSASRKITCVVC) adopts a C4-type zinc-finger fold.

Belongs to the eukaryotic ribosomal protein eS27 family. In terms of assembly, part of the 30S ribosomal subunit. The cofactor is Zn(2+).

In Methanosarcina barkeri (strain Fusaro / DSM 804), this protein is Small ribosomal subunit protein eS27.